The chain runs to 279 residues: Thymidylate synthase (279 aa).

133-134 contacts dUMP; that stretch reads RR. Residue cysteine 154 is the Nucleophile of the active site. Residues 178–181, asparagine 189, and 219–221 each bind dUMP; these read RSND and HIY. Position 181 (aspartate 181) interacts with (6R)-5,10-methylene-5,6,7,8-tetrahydrofolate. Residue alanine 278 coordinates (6R)-5,10-methylene-5,6,7,8-tetrahydrofolate.

The protein belongs to the thymidylate synthase family. Bacterial-type ThyA subfamily. As to quaternary structure, homodimer.

It localises to the cytoplasm. The catalysed reaction is dUMP + (6R)-5,10-methylene-5,6,7,8-tetrahydrofolate = 7,8-dihydrofolate + dTMP. It participates in pyrimidine metabolism; dTTP biosynthesis. Catalyzes the reductive methylation of 2'-deoxyuridine-5'-monophosphate (dUMP) to 2'-deoxythymidine-5'-monophosphate (dTMP) while utilizing 5,10-methylenetetrahydrofolate (mTHF) as the methyl donor and reductant in the reaction, yielding dihydrofolate (DHF) as a by-product. This enzymatic reaction provides an intracellular de novo source of dTMP, an essential precursor for DNA biosynthesis. The protein is Thymidylate synthase of Streptococcus pyogenes serotype M6 (strain ATCC BAA-946 / MGAS10394).